The primary structure comprises 520 residues: GMP synthase [glutamine-hydrolyzing] (520 aa).

One can recognise a Glutamine amidotransferase type-1 domain in the interval 9-202; it reads TILIIDFGSQ…VHRIVGVKPG (194 aa). The active-site Nucleophile is Cys-86. Active-site residues include His-176 and Glu-178. A GMPS ATP-PPase domain is found at 203-395; it reads WTMGAYREQA…LGLPDSFIGR (193 aa). 230–236 contacts ATP; the sequence is SGGVDSS.

Homodimer.

It catalyses the reaction XMP + L-glutamine + ATP + H2O = GMP + L-glutamate + AMP + diphosphate + 2 H(+). The protein operates within purine metabolism; GMP biosynthesis; GMP from XMP (L-Gln route): step 1/1. Catalyzes the synthesis of GMP from XMP. The polypeptide is GMP synthase [glutamine-hydrolyzing] (Brucella ovis (strain ATCC 25840 / 63/290 / NCTC 10512)).